Reading from the N-terminus, the 192-residue chain is UPF0312 protein PC1_2518 (192 aa).

Positions 1–23 are cleaved as a signal peptide; that stretch reads MLKKTLLSLTAVSMLASAGSALA.

Belongs to the UPF0312 family. Type 1 subfamily.

It is found in the periplasm. This chain is UPF0312 protein PC1_2518, found in Pectobacterium carotovorum subsp. carotovorum (strain PC1).